Consider the following 312-residue polypeptide: 6-hydroxy-3-succinoylpyridine 3-monooxygenase HspA (312 aa).

The NYN domain occupies 14–210 (IYIDGYNFYY…RSANTDLIKF (197 aa)).

It catalyses the reaction 4-(6-hydroxypyridin-3-yl)-4-oxobutanoate + 2 NADH + O2 + 2 H(+) = 2,5-dihydroxypyridine + succinate semialdehyde + 2 NAD(+) + H2O. It functions in the pathway alkaloid degradation; nicotine degradation. Its function is as follows. Involved in the nicotine degradation. Catalyzes the cleavage of 6-hydroxy-3-succinoylpyridine (HSP) by incorporation of oxygen at the 3-position to produce to 2,5-dihydroxypyridine (DHP) and succinic semialdehyde. This is 6-hydroxy-3-succinoylpyridine 3-monooxygenase HspA from Pseudomonas putida (strain DSM 28022 / S16).